Here is a 257-residue protein sequence, read N- to C-terminus: Deoxyribose-phosphate aldolase (257 aa).

The Proton donor/acceptor role is filled by aspartate 102. The Schiff-base intermediate with acetaldehyde role is filled by lysine 166. Lysine 198 serves as the catalytic Proton donor/acceptor.

It belongs to the DeoC/FbaB aldolase family. DeoC type 2 subfamily.

It is found in the cytoplasm. It carries out the reaction 2-deoxy-D-ribose 5-phosphate = D-glyceraldehyde 3-phosphate + acetaldehyde. Its pathway is carbohydrate degradation; 2-deoxy-D-ribose 1-phosphate degradation; D-glyceraldehyde 3-phosphate and acetaldehyde from 2-deoxy-alpha-D-ribose 1-phosphate: step 2/2. Functionally, catalyzes a reversible aldol reaction between acetaldehyde and D-glyceraldehyde 3-phosphate to generate 2-deoxy-D-ribose 5-phosphate. The protein is Deoxyribose-phosphate aldolase of Aeromonas hydrophila subsp. hydrophila (strain ATCC 7966 / DSM 30187 / BCRC 13018 / CCUG 14551 / JCM 1027 / KCTC 2358 / NCIMB 9240 / NCTC 8049).